Reading from the N-terminus, the 313-residue chain is Ribosomal RNA small subunit methyltransferase H (313 aa).

Residues 31-33 (GGH), aspartate 51, phenylalanine 77, aspartate 95, and glutamine 102 contribute to the S-adenosyl-L-methionine site.

Belongs to the methyltransferase superfamily. RsmH family.

It localises to the cytoplasm. The enzyme catalyses cytidine(1402) in 16S rRNA + S-adenosyl-L-methionine = N(4)-methylcytidine(1402) in 16S rRNA + S-adenosyl-L-homocysteine + H(+). Specifically methylates the N4 position of cytidine in position 1402 (C1402) of 16S rRNA. This is Ribosomal RNA small subunit methyltransferase H from Xylella fastidiosa (strain M12).